The primary structure comprises 337 residues: Calcium-binding protein 39-like (337 aa).

This sequence belongs to the Mo25 family. Component of a trimeric complex composed of STK11/LKB1, STRAD (STRADA or STRADB) and CAB39/MO25 (CAB39/MO25alpha or CAB39L/MO25beta): the complex tethers STK11/LKB1 in the cytoplasm and stimulates its catalytic activity.

Component of a complex that binds and activates STK11/LKB1. In the complex, required to stabilize the interaction between CAB39/MO25 (CAB39/MO25alpha or CAB39L/MO25beta) and STK11/LKB1. This is Calcium-binding protein 39-like (Cab39l) from Mus musculus (Mouse).